Consider the following 321-residue polypeptide: Ribose-phosphate pyrophosphokinase C (321 aa).

Mg(2+)-binding residues include aspartate 132 and aspartate 147. Positions 214 to 229 (SGKVAIIIGSIADTCE) are binding of phosphoribosylpyrophosphate.

It belongs to the ribose-phosphate pyrophosphokinase family. The cofactor is Mg(2+).

The protein resides in the cytoplasm. The enzyme catalyses D-ribose 5-phosphate + ATP = 5-phospho-alpha-D-ribose 1-diphosphate + AMP + H(+). It participates in metabolic intermediate biosynthesis; 5-phospho-alpha-D-ribose 1-diphosphate biosynthesis; 5-phospho-alpha-D-ribose 1-diphosphate from D-ribose 5-phosphate (route I): step 1/1. This chain is Ribose-phosphate pyrophosphokinase C (prsC), found in Dictyostelium discoideum (Social amoeba).